The primary structure comprises 331 residues: UPF0194 membrane protein YbhG (331 aa).

A signal peptide spans 1–19 (MKKPVVIGLAIAAIVAVIA). A coiled-coil region spans residues 107-208 (EEIAQAAAAV…LDLQDTTLIA (102 aa)).

The protein belongs to the UPF0194 family.

Its subcellular location is the periplasm. The sequence is that of UPF0194 membrane protein YbhG from Salmonella agona (strain SL483).